Here is a 110-residue protein sequence, read N- to C-terminus: UPF0060 membrane protein Mmwyl1_1139 (110 aa).

4 helical membrane passes run 7–27 (ISLF…PYLW), 33–53 (TIWL…LLTL), 63–83 (AAYG…VDGI), and 87–107 (TWDM…MFAP).

It belongs to the UPF0060 family.

It localises to the cell inner membrane. The protein is UPF0060 membrane protein Mmwyl1_1139 of Marinomonas sp. (strain MWYL1).